The sequence spans 193 residues: Cytidylate kinase (193 aa).

12–20 contacts ATP; it reads GLAGSGTTT.

This sequence belongs to the cytidylate kinase family. Type 2 subfamily.

The protein resides in the cytoplasm. The catalysed reaction is CMP + ATP = CDP + ADP. It carries out the reaction dCMP + ATP = dCDP + ADP. The sequence is that of Cytidylate kinase from Thermococcus kodakarensis (strain ATCC BAA-918 / JCM 12380 / KOD1) (Pyrococcus kodakaraensis (strain KOD1)).